A 245-amino-acid polypeptide reads, in one-letter code: Intron-associated endonuclease 1 (245 aa).

One can recognise a GIY-YIG domain in the interval 1–88; it reads MKSGIYQIKN…IKELNSKING (88 aa).

The protein to endonucleases of group I introns of fungi and phage. Mg(2+) is required as a cofactor.

In terms of biological role, this endonuclease is specific to the thymidylate synthase (td) gene splice junction and is involved in intron homing. This chain is Intron-associated endonuclease 1 (ITEVIR), found in Enterobacteria phage T4 (Bacteriophage T4).